Here is an 88-residue protein sequence, read N- to C-terminus: Small ribosomal subunit protein bS20 (88 aa).

Positions M1 to R20 are disordered.

The protein belongs to the bacterial ribosomal protein bS20 family.

Functionally, binds directly to 16S ribosomal RNA. This chain is Small ribosomal subunit protein bS20, found in Campylobacter fetus subsp. fetus (strain 82-40).